Here is a 315-residue protein sequence, read N- to C-terminus: Heme oxygenase 2 (315 aa).

The segment covering 1–15 (MSSEVETSEGVDESE) has biased composition (polar residues). Residues 1 to 29 (MSSEVETSEGVDESENNSTAPEKENHTKM) are disordered. An N-acetylserine modification is found at serine 2. Serine 2 carries the phosphoserine modification. The Cytoplasmic segment spans residues 2–294 (SSEVETSEGV…TAMAVLRKPS (293 aa)). Heme b-binding residues include histidine 44, tyrosine 153, lysine 198, and arginine 202. 2 HRM repeats span residues 263–268 (KCPFYA) and 280–285 (NCPFRT). An S-nitrosocysteine mark is found at cysteine 264 and cysteine 281. The chain crosses the membrane as a helical; Anchor for type IV membrane protein span at residues 295-315 (LQLILAASVALVAGLLAWYYM).

It belongs to the heme oxygenase family. A soluble form arises by proteolytic removal of the membrane anchor. Post-translationally, S-nitrosylated by BLVRB. In terms of tissue distribution, widely distributed in body with a high concentration in the brain.

It is found in the microsome membrane. The protein localises to the endoplasmic reticulum membrane. The enzyme catalyses heme b + 3 reduced [NADPH--hemoprotein reductase] + 3 O2 = biliverdin IXalpha + CO + Fe(2+) + 3 oxidized [NADPH--hemoprotein reductase] + 3 H2O + H(+). With respect to regulation, inhibited by metalloporphyrins such as Sn- and Zn-protoporphyrins. In terms of biological role, catalyzes the oxidative cleavage of heme at the alpha-methene bridge carbon, released as carbon monoxide (CO), to generate biliverdin IXalpha, while releasing the central heme iron chelate as ferrous iron. This is Heme oxygenase 2 (Hmox2) from Rattus norvegicus (Rat).